The following is a 557-amino-acid chain: Eukaryotic translation initiation factor 3 subunit D-2 (557 aa).

The interval 292–306 (QFDMLTVNETALEPP) is RNA gate. Residues 533–557 (FDSDNNDGEETSDDRPFLNSKDNKL) form a disordered region. A compositionally biased stretch (basic and acidic residues) spans 545–557 (DDRPFLNSKDNKL).

It belongs to the eIF-3 subunit D family. In terms of assembly, component of the eukaryotic translation initiation factor 3 (eIF-3) complex. The eIF-3 complex interacts with pix.

The protein localises to the cytoplasm. Functionally, mRNA cap-binding component of the eukaryotic translation initiation factor 3 (eIF-3) complex, which is involved in protein synthesis of a specialized repertoire of mRNAs and, together with other initiation factors, stimulates binding of mRNA and methionyl-tRNAi to the 40S ribosome. The eIF-3 complex specifically targets and initiates translation of a subset of mRNAs involved in cell proliferation. In the eIF-3 complex, eif3d specifically recognizes and binds the 7-methylguanosine cap of a subset of mRNAs. The polypeptide is Eukaryotic translation initiation factor 3 subunit D-2 (Drosophila grimshawi (Hawaiian fruit fly)).